The primary structure comprises 476 residues: MEFKEGLTFDDVLLVPKYSDITSRSQTDLTTKLSRNITINIPFVSANMDTVTESSMAVAMARAGGIGIIHRFLTIQEQANEVLKVKRSGSVMIENPYSISSDKSIQDALDYAEDKEISGLLVVDSNSKLVGIVTERDLLFAGSNGTIADVMTKDVVTAKPGVSLDEAKDILHKHRIEKLPIVDDSGIIQGLITSKDITNNTDYPNASKDKKGRPLVGAAVGVKGDFLERSESLLNAGADVLVVDIAHGHSENAISTVRNIKKAFPDCELIAGNIATAQGAEDLIKAGVDAVKVGVGSGSICITRVITGSGVPQLTAVMDCAKIGNDHGIPIISDGGTRTSGDATKALAAGASSVMVGSMLGGTDESPGTVLTKNGKRFKVYRGMASLAASIGRKSKETGSISLEDDLNDYVAEGVEAMVPYKGTVTDILKQLAGGVRSGLSYCGAHTIPQMQQNAEFIKMSRAGFAESQPHDVLLM.

CBS domains are found at residues 92-150 (MIEN…IADV) and 151-207 (MTKD…PNAS). NAD(+)-binding positions include Asp244 and 294-296 (GVG). Residues Gly296 and Gly298 each coordinate K(+). Position 299 (Ser299) interacts with IMP. Cys301 serves as a coordination point for K(+). Residue Cys301 is the Thioimidate intermediate of the active site. IMP-binding positions include 334-336 (DGG), 357-358 (GS), 381-385 (YRGMA), and Glu413. Residues Glu467 and Ser468 each contribute to the K(+) site.

The protein belongs to the IMPDH/GMPR family. As to quaternary structure, homotetramer. K(+) is required as a cofactor.

It carries out the reaction IMP + NAD(+) + H2O = XMP + NADH + H(+). It participates in purine metabolism; XMP biosynthesis via de novo pathway; XMP from IMP: step 1/1. With respect to regulation, mycophenolic acid (MPA) is a non-competitive inhibitor that prevents formation of the closed enzyme conformation by binding to the same site as the amobile flap. In contrast, mizoribine monophosphate (MZP) is a competitive inhibitor that induces the closed conformation. MPA is a potent inhibitor of mammalian IMPDHs but a poor inhibitor of the bacterial enzymes. MZP is a more potent inhibitor of bacterial IMPDH. Functionally, catalyzes the conversion of inosine 5'-phosphate (IMP) to xanthosine 5'-phosphate (XMP), the first committed and rate-limiting step in the de novo synthesis of guanine nucleotides, and therefore plays an important role in the regulation of cell growth. The protein is Inosine-5'-monophosphate dehydrogenase of Nitrosopumilus maritimus (strain SCM1).